We begin with the raw amino-acid sequence, 878 residues long: F-box DNA helicase protein 1 (878 aa).

The region spanning 8-56 is the F-box domain; the sequence is SCKFYRLPLEIIPLICRFLSVQDIQSFIRVFPSFQTILDSSNDLFWKKK.

The protein belongs to the helicase family. UvrD subfamily. In terms of assembly, part of the E3 ubiquitin ligase Skp1-Cullin-1-F-box (SCF) complex. Interacts with skp1 and ssb1. The cofactor is Mg(2+). Mn(2+) serves as cofactor.

It localises to the cytoplasm. The protein resides in the nucleus. It carries out the reaction Couples ATP hydrolysis with the unwinding of duplex DNA by translocating in the 3'-5' direction.. The enzyme catalyses ATP + H2O = ADP + phosphate + H(+). It participates in protein modification; protein ubiquitination. Functionally, involved in ATP-dependent DNA-unwinding in a 3' to 5' direction, and ATP-ase activities stimulated by the single-stranded DNA-binding protein ssb1. Essential for viability and normal growth of stationary phase cells and in the absence of either srs2 or rqh1 DNA helicase. Involved in DNA recombination repair of strand breaks and stalled or collapsed replication forks, on the rhp51-dependent pathway: promotes rhp51 filament dissolution from stalled forks, thereby inhibiting homologous recombination and preventing excessive recombination. Ubiquitination and DNA helicase activities are essential for controlling rhp51-dependent recombination in the absence of rad22. Plays a role in the processing of toxic recombination intermediates. Promotes proper chromosome segregation. The protein is F-box DNA helicase protein 1 (fbh1) of Schizosaccharomyces pombe (strain 972 / ATCC 24843) (Fission yeast).